A 217-amino-acid chain; its full sequence is 3,4-dihydroxy-2-butanone 4-phosphate synthase (217 aa).

Residues 37–38 (RE), Asp42, 150–154 (RRGHT), and Glu174 contribute to the D-ribulose 5-phosphate site. A Mg(2+)-binding site is contributed by Glu38. His153 is a binding site for Mg(2+).

It belongs to the DHBP synthase family. As to quaternary structure, homodimer. The cofactor is Mg(2+). It depends on Mn(2+) as a cofactor.

The enzyme catalyses D-ribulose 5-phosphate = (2S)-2-hydroxy-3-oxobutyl phosphate + formate + H(+). Its pathway is cofactor biosynthesis; riboflavin biosynthesis; 2-hydroxy-3-oxobutyl phosphate from D-ribulose 5-phosphate: step 1/1. Catalyzes the conversion of D-ribulose 5-phosphate to formate and 3,4-dihydroxy-2-butanone 4-phosphate. In Shewanella woodyi (strain ATCC 51908 / MS32), this protein is 3,4-dihydroxy-2-butanone 4-phosphate synthase.